The following is a 464-amino-acid chain: Arginine biosynthesis bifunctional protein ArgJ, chloroplastic (464 aa).

Substrate-binding residues include Thr-208, Lys-234, Thr-245, Glu-332, Asn-459, and Thr-464. Residue Thr-245 is the Nucleophile of the active site.

It belongs to the ArgJ family. In terms of assembly, heterodimer of an alpha and a beta chain.

The protein resides in the plastid. Its subcellular location is the chloroplast. It catalyses the reaction N(2)-acetyl-L-ornithine + L-glutamate = N-acetyl-L-glutamate + L-ornithine. The enzyme catalyses L-glutamate + acetyl-CoA = N-acetyl-L-glutamate + CoA + H(+). It participates in amino-acid biosynthesis; L-arginine biosynthesis; L-ornithine and N-acetyl-L-glutamate from L-glutamate and N(2)-acetyl-L-ornithine (cyclic): step 1/1. The protein operates within amino-acid biosynthesis; L-arginine biosynthesis; N(2)-acetyl-L-ornithine from L-glutamate: step 1/4. Its function is as follows. Catalyzes two activities which are involved in the cyclic version of arginine biosynthesis: the synthesis of acetylglutamate from glutamate and acetyl-CoA, and of ornithine by transacetylation between acetylornithine and glutamate. The protein is Arginine biosynthesis bifunctional protein ArgJ, chloroplastic of Sorghum bicolor (Sorghum).